Here is a 637-residue protein sequence, read N- to C-terminus: Chaperone protein DnaK (637 aa).

A Phosphothreonine; by autocatalysis modification is found at threonine 198. Positions 597-637 (MYQQQAEGDAARDAAQDAAKDDVVDAEFTEVDDDKNDKKSA) are disordered. Residues 605–619 (DAARDAAQDAAKDDV) are compositionally biased toward basic and acidic residues. Residues 620-630 (VDAEFTEVDDD) are compositionally biased toward acidic residues.

Belongs to the heat shock protein 70 family.

In terms of biological role, acts as a chaperone. The polypeptide is Chaperone protein DnaK (Afipia carboxidovorans (strain ATCC 49405 / DSM 1227 / KCTC 32145 / OM5) (Oligotropha carboxidovorans)).